A 1029-amino-acid polypeptide reads, in one-letter code: Chitin synthase 2 (1029 aa).

3 disordered regions span residues 1 to 160 (MDRP…GARS), 174 to 216 (SDVD…SHLR), and 234 to 257 (AHYG…QKSR). The segment covering 61–77 (PSVSSIHSRPSSISNIP) has biased composition (low complexity). Residues 244 to 257 (DQQRRGVREPQKSR) are compositionally biased toward basic and acidic residues. N-linked (GlcNAc...) asparagine glycosylation is present at Asn348. The next 8 membrane-spanning stretches (helical) occupy residues 639-659 (WLNG…QLWA), 681-701 (VLFT…VAGG), 716-736 (LYIF…QFIL), 752-772 (SMVI…YIVI), 791-811 (NLIV…FIYL), 820-840 (SIQY…YAFC), 918-938 (YMVV…SEIY), and 952-972 (ILWS…TFAI).

Belongs to the chitin synthase family. Class II subfamily.

The protein resides in the cell membrane. The enzyme catalyses [(1-&gt;4)-N-acetyl-beta-D-glucosaminyl](n) + UDP-N-acetyl-alpha-D-glucosamine = [(1-&gt;4)-N-acetyl-beta-D-glucosaminyl](n+1) + UDP + H(+). Functionally, polymerizes chitin, a structural polymer of the cell wall and septum, by transferring the sugar moiety of UDP-GlcNAc to the non-reducing end of the growing chitin polymer. Plays an important role in cell wall integrity and has distinct functions in invasive hyphae and vegetative hyphae, but is not involved in plant infection. In Pyricularia oryzae (strain 70-15 / ATCC MYA-4617 / FGSC 8958) (Rice blast fungus), this protein is Chitin synthase 2.